The chain runs to 154 residues: Putative NADPH-dependent 7-cyano-7-deazaguanine reductase (154 aa).

Residue Asp-52 is the Proton donor of the active site. Substrate-binding positions include 67–69 (VES) and 86–87 (HE).

Belongs to the GTP cyclohydrolase I family. QueF type 1 subfamily.

It is found in the cytoplasm. It catalyses the reaction 7-aminomethyl-7-carbaguanine + 2 NADP(+) = 7-cyano-7-deazaguanine + 2 NADPH + 3 H(+). The protein operates within tRNA modification; tRNA-queuosine biosynthesis. Catalyzes the NADPH-dependent reduction of 7-cyano-7-deazaguanine (preQ0) to 7-aminomethyl-7-deazaguanine (preQ1). The protein is Putative NADPH-dependent 7-cyano-7-deazaguanine reductase of Streptococcus pneumoniae serotype 4 (strain ATCC BAA-334 / TIGR4).